Consider the following 429-residue polypeptide: Adenosylhomocysteinase (429 aa).

Substrate is bound by residues Thr64, Asp136, and Glu161. 162 to 164 (TTT) is a binding site for NAD(+). Residues Lys191 and Asp195 each coordinate substrate. NAD(+) is bound by residues Asn196, 225–230 (GYGWCG), Glu248, Asn283, 304–306 (SGH), and Asn351.

Belongs to the adenosylhomocysteinase family. Requires NAD(+) as cofactor.

Its subcellular location is the cytoplasm. It carries out the reaction S-adenosyl-L-homocysteine + H2O = L-homocysteine + adenosine. It participates in amino-acid biosynthesis; L-homocysteine biosynthesis; L-homocysteine from S-adenosyl-L-homocysteine: step 1/1. Functionally, may play a key role in the regulation of the intracellular concentration of adenosylhomocysteine. The sequence is that of Adenosylhomocysteinase from Gloeothece citriformis (strain PCC 7424) (Cyanothece sp. (strain PCC 7424)).